The sequence spans 1002 residues: Carboxypeptidase Y (1002 aa).

A signal peptide spans 1-18 (MLMKQTFLYFLLTCVVSA). A propeptide spanning residues 19–521 (QFNGYVPPEQ…AYLEMLKAEG (503 aa)) is cleaved from the precursor. Disordered stretches follow at residues 51–91 (QEES…TALE), 124–436 (DEDE…NMQS), and 527–546 (AFRD…ADSS). 2 stretches are compositionally biased toward basic and acidic residues: residues 63–81 (PERD…HEFN) and 127–143 (EHVR…EDAP). The segment covering 144 to 170 (RRKHGKCKGKGKHHKGKHAKGKGKKSH) has biased composition (basic residues). Positions 171–205 (PKPEDDSVFFDDERPKHHEFDDEDREFPAHHEPGE) are enriched in basic and acidic residues. 15 consecutive repeat copies span residues 225 to 237 (MHHE…PPPP), 238 to 250 (MHHE…PPPP), 251 to 263 (MHHE…PPPP), 264 to 276 (MHHE…PPPP), 277 to 289 (MHHE…PPPP), 290 to 302 (MHHE…PPPP), 303 to 315 (MHHE…PPPP), 316 to 328 (MHHE…PPPP), 329 to 341 (MHHE…PPPP), 361 to 369 (DKEHHKGPK), 370 to 378 (DKEHHKGPK), 379 to 387 (DKEHHKGPK), 388 to 396 (DKEHHKGPK), 397 to 405 (DKEHHKGPK), and 406 to 414 (DKEHHKGPK). Residues 225 to 341 (MHHEPGEHMP…EPGEHMPPPP (117 aa)) are 9 X 13 AA tandem repeats of M-H-H-E-P-G-E-H-M-P-P-P-P. Residues 343 to 431 (KHHELEEHEG…PKEKHNERPE (89 aa)) show a composition bias toward basic and acidic residues. Residues 361–423 (DKEHHKGPKD…KDKEHHQGPK (63 aa)) form a 7 X 9 AA tandem repeats of D-K-E-H-H-K-G-P-K region. The 2-7; approximate repeat unit spans residues 415 to 423 (DKEHHQGPK). Cystine bridges form between Cys-627-Cys-880, Cys-776-Cys-789, Cys-799-Cys-822, Cys-806-Cys-815, and Cys-844-Cys-851. Asn-659 is a glycosylation site (N-linked (GlcNAc...) asparagine). The active site involves Ser-715. Asp-921 is a catalytic residue. Cys-924 contributes to the substrate binding site. His-978 is a catalytic residue. Position 979 (Met-979) interacts with substrate.

The protein belongs to the peptidase S10 family. As to quaternary structure, heterodimer of two subunits of 32 kDa and 19 kDa derived from the precursor protein and linked by a disulfide bond.

It is found in the vacuole. It catalyses the reaction Release of a C-terminal amino acid with broad specificity.. In terms of biological role, involved in degradation of small peptides. Digests preferentially peptides containing an aliphatic or hydrophobic residue in P1' position, as well as methionine, leucine or phenylalanine in P1 position of ester substrate. This Schizosaccharomyces pombe (strain 972 / ATCC 24843) (Fission yeast) protein is Carboxypeptidase Y (cpy1).